Here is a 432-residue protein sequence, read N- to C-terminus: Glutamyl-tRNA reductase (432 aa).

Residues 49–52 (TCNR), Ser-107, 112–114 (ETQ), and Gln-118 contribute to the substrate site. Cys-50 acts as the Nucleophile in catalysis. An NADP(+)-binding site is contributed by 186-191 (GAGEMG).

It belongs to the glutamyl-tRNA reductase family. As to quaternary structure, homodimer.

The catalysed reaction is (S)-4-amino-5-oxopentanoate + tRNA(Glu) + NADP(+) = L-glutamyl-tRNA(Glu) + NADPH + H(+). Its pathway is porphyrin-containing compound metabolism; protoporphyrin-IX biosynthesis; 5-aminolevulinate from L-glutamyl-tRNA(Glu): step 1/2. Its function is as follows. Catalyzes the NADPH-dependent reduction of glutamyl-tRNA(Glu) to glutamate 1-semialdehyde (GSA). In Campylobacter jejuni subsp. jejuni serotype O:6 (strain 81116 / NCTC 11828), this protein is Glutamyl-tRNA reductase.